The primary structure comprises 66 residues: Large ribosomal subunit protein bL33c (66 aa).

Belongs to the bacterial ribosomal protein bL33 family.

The protein localises to the plastid. It is found in the chloroplast. In Eucalyptus globulus subsp. globulus (Tasmanian blue gum), this protein is Large ribosomal subunit protein bL33c.